A 155-amino-acid chain; its full sequence is Ribosome maturation factor RimP (155 aa).

It belongs to the RimP family.

Its subcellular location is the cytoplasm. Functionally, required for maturation of 30S ribosomal subunits. This Macrococcus caseolyticus (strain JCSC5402) (Macrococcoides caseolyticum) protein is Ribosome maturation factor RimP.